The chain runs to 88 residues: Small ribosomal subunit protein uS17 (88 aa).

It belongs to the universal ribosomal protein uS17 family. As to quaternary structure, part of the 30S ribosomal subunit.

In terms of biological role, one of the primary rRNA binding proteins, it binds specifically to the 5'-end of 16S ribosomal RNA. This Saccharophagus degradans (strain 2-40 / ATCC 43961 / DSM 17024) protein is Small ribosomal subunit protein uS17.